The sequence spans 459 residues: DNA damage-inducible protein F (459 aa).

12 helical membrane-spanning segments follow: residues 2-22, 29-49, 63-83, 111-131, 154-174, 180-200, 207-227, 265-285, 289-309, 338-358, 373-393, and 416-436; these read PPGV…MAFL, LWHL…LGLV, LGGV…LLFL, LLLA…IIDL, WLSA…LGVQ, VILL…LVMG, GAAL…LLMV, LLQL…SDII, AVLM…AYAV, IVAL…IALL, IWQV…GMFI, and LLTL…VFLA.

This sequence belongs to the multi antimicrobial extrusion (MATE) (TC 2.A.66.1) family.

The protein localises to the cell inner membrane. The sequence is that of DNA damage-inducible protein F (dinF) from Escherichia coli (strain K12).